Consider the following 374-residue polypeptide: Beta-1,3-N-acetylglucosaminyltransferase lunatic fringe (374 aa).

Residues 1–8 are Cytoplasmic-facing; that stretch reads MLKTYRGK. The chain crosses the membrane as a helical; Signal-anchor for type II membrane protein span at residues 9-29; the sequence is VVVSLAGATVTCLGFLLFLSQ. The Lumenal portion of the chain corresponds to 30-374; sequence HQRIQADGMQ…TPWCPPQVAY (345 aa). Residue Asn40 is glycosylated (N-linked (GlcNAc...) asparagine). The disordered stretch occupies residues 80-100; that stretch reads RSRREADKPSEAPGAATDAPP. Arg123 serves as a coordination point for substrate. The N-linked (GlcNAc...) asparagine glycan is linked to Asn162. 2 cysteine pairs are disulfide-bonded: Cys163–Cys174 and Cys192–Cys255. Position 196 (Asp196) interacts with substrate. Asp197 provides a ligand contact to Mn(2+). Residue Asp285 is part of the active site. A Mn(2+)-binding site is contributed by His309. Cys359 and Cys368 form a disulfide bridge.

It belongs to the glycosyltransferase 31 family. Requires Mn(2+) as cofactor. It depends on Co(2+) as a cofactor. In terms of processing, a soluble form may be derived from the membrane form by proteolytic processing. As to expression, in the embryo, expressed along the A-P axis of the neural tube, within the lateral plate mesoderm, in the presomitic mesoderm and the somites, in specific rhombomeres of the hindbrain (even-numbered rhombomeres) and in the otic vesicles.

It localises to the golgi apparatus membrane. The catalysed reaction is 3-O-(alpha-L-fucosyl)-L-threonyl-[EGF-like domain protein] + UDP-N-acetyl-alpha-D-glucosamine = 3-O-(N-acetyl-beta-D-glucosaminyl-(1-&gt;3)-alpha-L-fucosyl)-L-threonyl-[EGF-like domain protein] + UDP + H(+). The enzyme catalyses 3-O-(alpha-L-fucosyl)-L-seryl-[EGF-like domain protein] + UDP-N-acetyl-alpha-D-glucosamine = 3-O-(N-acetyl-beta-D-glucosaminyl-(1-&gt;3)-alpha-L-fucosyl)-L-seryl-[EGF-like domain protein] + UDP + H(+). In terms of biological role, glycosyltransferase that initiates the elongation of O-linked fucose residues attached to EGF-like repeats in the extracellular domain of Notch molecules. Involved in the correct formation of boundaries in the somites and hindbrain. Required for Delta-Notch-mediated induction of hypochord cells at the lateral borders of the midline precursor domain. This chain is Beta-1,3-N-acetylglucosaminyltransferase lunatic fringe (lfng), found in Danio rerio (Zebrafish).